The chain runs to 2963 residues: tRNA nuclease CdiA (2963 aa).

Residues 1–29 (MIPIYLRQKLISYALIYLVAIQPIMPVMA) form the signal peptide. The tract at residues 35–320 (AQGSTALDKA…AQGNITLNSH (286 aa)) is two-partner system transport domain (TPS). The segment at 573–1074 (GNVVAQEHAQ…MVLNTASLLN (502 aa)) is FHA-1. Residues 1075-1342 (RRDGFSVTEK…KPLTRAQLSD (268 aa)) are receptor binding domain (RBD). Positions 1343-1528 (YPLPDSNNGL…LAKAEQAHLQ (186 aa)) are YP domain. Residues 1529–1751 (GSVISGNKVE…ATLQAERDVN (223 aa)) are periplasmic FHA-1 repeat (pFR). Over residues 1759–1770 (TRNQHIDSEDKT) the composition is skewed to basic and acidic residues. Disordered regions lie at residues 1759 to 1787 (TRNQ…LTAS) and 1992 to 2012 (SKSS…SASA). Residues 1762 to 2314 (QHIDSEDKTT…DSDNYNSIQK (553 aa)) form an FHA-2 region. Residues 1771 to 1782 (TGYTRSTLSSGG) are compositionally biased toward polar residues. The VEDN CT cleavage motif signature appears at 2694–2697 (VEDN). The C-terminal effector domain (CT) stretch occupies residues 2694–2963 (VEDNNLSFGK…TGRVRNFHPN (270 aa)).

It in the N-terminal section; belongs to the CdiA toxin family. In the C-terminal section; belongs to the bacterial EndoU family. Forms a 1:1 complex with cognate immunity protein CdiI.

It is found in the secreted. The protein resides in the target cell. The protein localises to the target cell cytoplasm. Toxic component of a toxin-immunity protein module, which functions as a cellular contact-dependent growth inhibition (CDI) system. CDI modules allow bacteria to communicate with and inhibit the growth of closely related neighboring bacteria in a contact-dependent fashion. Targeting of the CT domain (residues 2824-2963) in the absence of immunity protein inhibits cell growth and causes tRNA(UUC-Glu) cleavage in the anticodon loop; expression of cognate immunity protein CdiI-43969 neutralizes growth inhibition and tRNA(UUC-Glu) remains intact, whereas non-cognate immunity proteins do not confer protection from the toxic effects. In terms of biological role, the CdiA protein is thought to be exported from the cell through the central lumen of CdiB, the other half of its two-partner system (TPS). The TPS domain probably remains associated with CdiB while the FHA-1 domain forms an extended filament with the receptor-binding domain (RBD) at its extremity; in the secretion arrested state the C-terminus of the RBD and YP domains form a hairpin-like structure as the FHA-2, PT and CT domains are periplasmic. The YP domain is probably responsible for this arrest at the point where it re-enters the host cell periplasm. Upon binding to a target cell outer membrane receptor a signal is transmitted to activate secretion. The filament elongates slightly, the rest of CdiA is secreted and the FHA-2 domain becomes stably associated with the target cell's outer membrane where it facilitates entry of the toxic CT domain into the target cell periplasm. From there the toxic CT domain is cleaved and gains access to the target cell cytoplasm via an inner membrane protein. This chain is tRNA nuclease CdiA, found in Yersinia mollaretii (strain ATCC 43969 / DSM 18520 / CIP 103324 / CNY 7263 / WAIP 204).